Reading from the N-terminus, the 206-residue chain is GTP cyclohydrolase 1 (206 aa).

Basic and acidic residues predominate over residues 1-17; the sequence is MDAVTPKKDIPRPDSVR. The interval 1 to 23 is disordered; it reads MDAVTPKKDIPRPDSVRRPSQQE. Zn(2+) contacts are provided by Cys95, His98, and Cys166.

It belongs to the GTP cyclohydrolase I family. Toroid-shaped homodecamer, composed of two pentamers of five dimers.

The catalysed reaction is GTP + H2O = 7,8-dihydroneopterin 3'-triphosphate + formate + H(+). Its pathway is cofactor biosynthesis; 7,8-dihydroneopterin triphosphate biosynthesis; 7,8-dihydroneopterin triphosphate from GTP: step 1/1. The sequence is that of GTP cyclohydrolase 1 from Hyphomonas neptunium (strain ATCC 15444).